We begin with the raw amino-acid sequence, 177 residues long: Small ribosomal subunit protein uS13 (177 aa).

Over residues 132–145 the composition is skewed to basic residues; the sequence is GVRHKRGQKVRGQR. The disordered stretch occupies residues 132–177; sequence GVRHKRGQKVRGQRTKSTGRTEGTIGVNVEAIKEEQAEDAAAEDDE. A compositionally biased stretch (acidic residues) spans 167 to 177; it reads QAEDAAAEDDE.

The protein belongs to the universal ribosomal protein uS13 family. Part of the 30S ribosomal subunit. Forms a loose heterodimer with protein S19. Forms two bridges to the 50S subunit in the 70S ribosome.

In terms of biological role, located at the top of the head of the 30S subunit, it contacts several helices of the 16S rRNA. In the 70S ribosome it contacts the 23S rRNA (bridge B1a) and protein L5 of the 50S subunit (bridge B1b), connecting the 2 subunits; these bridges are implicated in subunit movement. In Haloarcula marismortui (strain ATCC 43049 / DSM 3752 / JCM 8966 / VKM B-1809) (Halobacterium marismortui), this protein is Small ribosomal subunit protein uS13.